The sequence spans 1281 residues: Protein ETHYLENE-INSENSITIVE 2 (1281 aa).

Over 1–21 the chain is Cytoplasmic; it reads MDGQQLRSSESPASGGGGVTG. The helical transmembrane segment at 22–42 threads the bilayer; it reads GGAPHLFHALGPALLISIGYI. Residues 43–61 lie on the Extracellular side of the membrane; the sequence is DLGKWVAAVEAGSRFGLDL. A helical membrane pass occupies residues 62–82; it reads VLLALLFNFMAILCQYLAACI. Over 83–112 the chain is Cytoplasmic; sequence GTVTGRSLAEICHQEYSRPTCIFLGVQAGL. The chain crosses the membrane as a helical span at residues 113–133; that stretch reads SLLTSELTMIFGIALGFNLLF. At 134–137 the chain is on the extracellular side; that stretch reads EYDD. A helical membrane pass occupies residues 138 to 158; that stretch reads LITGICFATVVPNLLPYAISH. The Cytoplasmic segment spans residues 159 to 163; the sequence is LGKKM. The chain crosses the membrane as a helical span at residues 164–184; the sequence is VGTLNACIAGFALLCYVLGLL. Topologically, residues 185-208 are extracellular; the sequence is VSQPQIPLTTNVIFPKLSGESAYS. The helical transmembrane segment at 209-229 threads the bilayer; that stretch reads LMALLGANVMAHNFYIHSSVV. The Cytoplasmic portion of the chain corresponds to 230–238; it reads QGQKRSAFA. The helical transmembrane segment at 239-259 threads the bilayer; that stretch reads VGALFHDHLFSVLFIFTGIFL. Residues 260–297 lie on the Extracellular side of the membrane; it reads VNHVLMNSAAADSTNTLLLTFQDVVELMNQIFVNPMAP. The chain crosses the membrane as a helical span at residues 298–318; the sequence is TIFLVVLLFSSHIISLTSAIG. Residues 319-325 lie on the Cytoplasmic side of the membrane; it reads SQVISQH. The chain crosses the membrane as a helical span at residues 326–346; that stretch reads LFGINLPLSGHHLILKAFAIV. The Extracellular portion of the chain corresponds to 347-362; the sequence is PALYCAKVAGAEGIYQ. Residues 363–383 form a helical membrane-spanning segment; it reads LLIICQIIQAMLLPSSVVPLF. Residues 384 to 400 lie on the Cytoplasmic side of the membrane; that stretch reads RVASSRLIMGAHRVSLH. The chain crosses the membrane as a helical span at residues 401 to 421; it reads LEILTFLAFLLMLFSNIIFMA. At 422–447 the chain is on the extracellular side; it reads EMLFGDSGWLNTLKGNTGSPVVFPST. Residues 448-468 form a helical membrane-spanning segment; it reads VLITVACVSVAFSLYMAVTPL. Residues 469–1281 are Cytoplasmic-facing; that stretch reads KSGSHEAELQ…KRRLSSKGQQ (813 aa). 2 disordered regions span residues 540-565 and 593-665; these read IESDHDSQHSTAHTSTAPESCHSPSF and ESTV…NGSG. The segment covering 548 to 557 has biased composition (polar residues); it reads HSTAHTSTAP. Basic and acidic residues predominate over residues 599–610; sequence VDSKSTGERDIE.

The protein belongs to the NRAMP (TC 2.A.55) family. In terms of tissue distribution, expressed in roots, leaf sheaths, leaf blades, flowers, developing seeds, germinating seeds and young seedlings. Expressed in adventitious roots, vascular tissues of the seminal roots, lateral roots, the connecting region between vascular tissues and lateral roots, mature leaf, mature stem, tips of adventitious roots derived from the node, shoot apex, young panicle, anthers, pistil, stigma, ovary, seed coat and fruit coat pericarp.

It is found in the membrane. Functionally, central factor in ethylene signaling pathways that control development, senescence and grain size. Acts as a positive component of the ethylene-signaling pathway. This is Protein ETHYLENE-INSENSITIVE 2 from Oryza sativa subsp. japonica (Rice).